The chain runs to 818 residues: Dipeptidyl aminopeptidase B (818 aa).

Over 1–29 (MEGGEEEVERIPDELFDTKKKHLLDKLIR) the chain is Cytoplasmic. Residues 30–45 (VGIILVLLIWGTVLLL) traverse the membrane as a helical; Signal-anchor for type II membrane protein segment. At 46 to 818 (KSIPHHSNTP…KRAFDGQFVK (773 aa)) the chain is on the lumenal side. Residues Asn-63, Asn-79, Asn-110, Asn-139, Asn-372, Asn-392, and Asn-421 are each glycosylated (N-linked (GlcNAc...) asparagine). Ser-679 acts as the Charge relay system in catalysis. N-linked (GlcNAc...) asparagine glycosylation is present at Asn-738. Active-site charge relay system residues include Asp-756 and His-789.

This sequence belongs to the peptidase S9B family.

Its subcellular location is the vacuole membrane. This chain is Dipeptidyl aminopeptidase B (DAP2), found in Saccharomyces cerevisiae (strain ATCC 204508 / S288c) (Baker's yeast).